Consider the following 842-residue polypeptide: Translation initiation factor IF-2 (842 aa).

Disordered regions lie at residues 1–41 (MVAK…GFPD) and 112–219 (RPNR…QTYQ). 2 stretches are compositionally biased toward basic and acidic residues: residues 32–41 (PEDKKQGFPD) and 153–165 (RRGE…RDFS). One can recognise a tr-type G domain in the interval 328–497 (ARPPVVTVMG…MLQAEVMELR (170 aa)). The interval 337–344 (GHVDHGKT) is G1. GTP is bound at residue 337-344 (GHVDHGKT). The interval 362-366 (GITQH) is G2. The segment at 383–386 (DTPG) is G3. Residues 383–387 (DTPGH) and 437–440 (NKID) each bind GTP. A G4 region spans residues 437 to 440 (NKID). A G5 region spans residues 473 to 475 (SAL).

Belongs to the TRAFAC class translation factor GTPase superfamily. Classic translation factor GTPase family. IF-2 subfamily.

It is found in the cytoplasm. In terms of biological role, one of the essential components for the initiation of protein synthesis. Protects formylmethionyl-tRNA from spontaneous hydrolysis and promotes its binding to the 30S ribosomal subunits. Also involved in the hydrolysis of GTP during the formation of the 70S ribosomal complex. This is Translation initiation factor IF-2 (infB) from Treponema pallidum (strain Nichols).